We begin with the raw amino-acid sequence, 69 residues long: Putative membrane protein insertion efficiency factor (69 aa).

It belongs to the UPF0161 family.

It is found in the cell membrane. Could be involved in insertion of integral membrane proteins into the membrane. This Clostridium perfringens (strain SM101 / Type A) protein is Putative membrane protein insertion efficiency factor.